Consider the following 414-residue polypeptide: Esterase FrsA (414 aa).

It belongs to the FrsA family.

It catalyses the reaction a carboxylic ester + H2O = an alcohol + a carboxylate + H(+). In terms of biological role, catalyzes the hydrolysis of esters. This is Esterase FrsA from Shigella boydii serotype 18 (strain CDC 3083-94 / BS512).